The sequence spans 25 residues: Arginine attenuator peptide (25 aa).

The protein belongs to the arginine attenuator peptide family.

In terms of biological role, arginine attenuator peptide (AAP) that has a regulatory role in the production of arginine-specific carbamoyl phosphate synthetase. Encoded by an upstream open reading frame (uORF) within the 5'-leader region of arginine-specific carbamoyl phosphate synthetase small chain (CPA1) mRNA, it attenuates the translation of the downstream CPA1 ORF. In the presence of high concentrations of arginine, ribosomes translating the uORF encoding AAP stall at the termination codon, resulting in reduced translation from the downstream CPA1 initiation codon. The sequence is that of Arginine attenuator peptide from Saccharomyces cerevisiae (strain ATCC 204508 / S288c) (Baker's yeast).